A 123-amino-acid chain; its full sequence is Peptide methionine sulfoxide reductase MsrA (123 aa).

The active site involves C8.

This sequence belongs to the MsrA Met sulfoxide reductase family.

The catalysed reaction is L-methionyl-[protein] + [thioredoxin]-disulfide + H2O = L-methionyl-(S)-S-oxide-[protein] + [thioredoxin]-dithiol. It carries out the reaction [thioredoxin]-disulfide + L-methionine + H2O = L-methionine (S)-S-oxide + [thioredoxin]-dithiol. Has an important function as a repair enzyme for proteins that have been inactivated by oxidation. Catalyzes the reversible oxidation-reduction of methionine sulfoxide in proteins to methionine. The protein is Peptide methionine sulfoxide reductase MsrA of Thermoactinomyces vulgaris.